The following is a 130-amino-acid chain: Small ribosomal subunit protein uS11 (130 aa).

The protein belongs to the universal ribosomal protein uS11 family. As to quaternary structure, part of the 30S ribosomal subunit. Interacts with proteins S7 and S18. Binds to IF-3.

Its function is as follows. Located on the platform of the 30S subunit, it bridges several disparate RNA helices of the 16S rRNA. Forms part of the Shine-Dalgarno cleft in the 70S ribosome. The protein is Small ribosomal subunit protein uS11 of Bdellovibrio bacteriovorus (strain ATCC 15356 / DSM 50701 / NCIMB 9529 / HD100).